We begin with the raw amino-acid sequence, 209 residues long: Casparian strip membrane protein 1 (209 aa).

Residues 1-46 (MSSGANATTIDVPETRAEAKGKAPLIAAPIVATTKATPHPNAGWKK) are Cytoplasmic-facing. The chain crosses the membrane as a helical span at residues 47 to 67 (GLAIFDFLLRLAAIAATLAAA). Residues 68–95 (TTMGTTDETLPFFTQFFQFQASFDDLPA) lie on the Extracellular side of the membrane. The chain crosses the membrane as a helical span at residues 96–116 (FMFFVVATAIASGYLALSLPF). Residues 117–137 (SLVSIFRPHAQGIRLLLIISD) lie on the Cytoplasmic side of the membrane. The helical transmembrane segment at 138–158 (TVMLALTTAGAASATAIVYLA) threads the bilayer. Topologically, residues 159 to 183 (HNGDSSANWIAICQQFTDFCQSVSG) are extracellular. Residues 184–204 (AVVASFIAVVIFMLLVMMSAL) traverse the membrane as a helical segment. Over 205–209 (ALRKH) the chain is Cytoplasmic.

The protein belongs to the Casparian strip membrane proteins (CASP) family. Homodimer and heterodimers.

It localises to the cell membrane. Functionally, regulates membrane-cell wall junctions and localized cell wall deposition. Required for establishment of the Casparian strip membrane domain (CSD) and the subsequent formation of Casparian strips, a cell wall modification of the root endodermis that determines an apoplastic barrier between the intraorganismal apoplasm and the extraorganismal apoplasm and prevents lateral diffusion. This is Casparian strip membrane protein 1 from Vitis vinifera (Grape).